Consider the following 220-residue polypeptide: Ribose-5-phosphate isomerase A (220 aa).

Residues 25–28, 80–83, and 93–96 contribute to the substrate site; these read TGST, DGAD, and KGGG. E102 serves as the catalytic Proton acceptor. Residue K120 participates in substrate binding.

Belongs to the ribose 5-phosphate isomerase family. As to quaternary structure, homodimer.

It catalyses the reaction aldehydo-D-ribose 5-phosphate = D-ribulose 5-phosphate. The protein operates within carbohydrate degradation; pentose phosphate pathway; D-ribose 5-phosphate from D-ribulose 5-phosphate (non-oxidative stage): step 1/1. Catalyzes the reversible conversion of ribose-5-phosphate to ribulose 5-phosphate. This chain is Ribose-5-phosphate isomerase A, found in Bacillus thuringiensis subsp. konkukian (strain 97-27).